The sequence spans 704 residues: Preterpestacin I synthase tpcA (704 aa).

The interval 1 to 329 (MEQLSYQSKL…CSACPRQNAW (329 aa)) is terpene cyclase. A Mg(2+)-binding site is contributed by Asp96. Residues Asp96, Asn231, 235 to 239 (SWERE), and 325 to 326 (RQ) contribute to the substrate site. A DDXXD 1 motif is present at residues 96–100 (DDGGE). The short motif at 231 to 239 (NDYFSWERE) is the NSE/DTE element. A prenyltransferase region spans residues 330 to 688 (KDMSSQSLNG…MLRLCLAKLS (359 aa)). A disordered region spans residues 361–380 (KDSSFFGSQPSDDEPSLSEV). Lys406, Arg409, and His438 together coordinate isopentenyl diphosphate. Mg(2+)-binding residues include Asp445 and Asp449. Residues 445-449 (DDLED) carry the DDXXD 2 motif. Arg454 contributes to the dimethylallyl diphosphate binding site. Arg455 serves as a coordination point for isopentenyl diphosphate. Dimethylallyl diphosphate is bound by residues Lys532, Thr533, Gln568, Asn575, Lys583, and Lys593.

The protein in the N-terminal section; belongs to the terpene synthase family. In the C-terminal section; belongs to the FPP/GGPP synthase family. Hexamer. It depends on Mg(2+) as a cofactor.

It catalyses the reaction isopentenyl diphosphate + (2E,6E)-farnesyl diphosphate = (2E,6E,10E)-geranylgeranyl diphosphate + diphosphate. It carries out the reaction isopentenyl diphosphate + (2E,6E,10E)-geranylgeranyl diphosphate = (2E,6E,10E,14E)-geranylfarnesyl diphosphate + diphosphate. Its pathway is secondary metabolite biosynthesis; terpenoid biosynthesis. In terms of biological role, bifunctional terpene synthase; part of the gene cluster that mediates the biosynthesis of terpestacin. The bifunctional terpene synthase tpcA converts isopentenyl diphosphate (IPP) and dimethylallyl diphosphate (DMAPP) into the sesterterpene preterpestacin I. The C-terminal prenyltransferase (PT) domain of tpcA catalyzes formation of GFPP, whereas the N-terminal terpene cyclase (TC) domain catalyzes the cyclization of GFPP into preterpestacin I. The cytochrome P450 monooxygenase tpcB then hydroxylates preterpestacin I to yield 24-hydroxypreterpstacin I (renamed as preterpestacin II) whereas the cytochrome P450 monooxygenase tpcC further hydroxylates preterpestacin II to yield 16,17-dihydroxypreterpestacin II (renamed as preterpestacin III). Finally, the FAD-dependent monooxygenase tpcD converts preterpestacin III into terpestacin. In Cochliobolus heterostrophus (strain C5 / ATCC 48332 / race O) (Southern corn leaf blight fungus), this protein is Preterpestacin I synthase tpcA.